The following is a 108-amino-acid chain: Peptidyl-prolyl cis-trans isomerase FKBP1A (108 aa).

One can recognise a PPIase FKBP-type domain in the interval 20–108 (GQTCVVHYTG…VFDVELLKLE (89 aa)). Residue lysine 53 is modified to N6-acetyllysine; alternate. Lysine 53 is subject to N6-succinyllysine; alternate.

The protein belongs to the FKBP-type PPIase family. FKBP1 subfamily. As to quaternary structure, interacts with TGFBR1; prevents TGFBR1 phosphorylation by TGFBR2 and stabilizes it in the inactive conformation. Interacts with ACVR1B and SMAD7. Identified in a complex composed of RYR1, PDE4D, PKA, FKBP1A and protein phosphatase 1 (PP1). Interacts directly with RYR2 and RYR3. Interacts with GLMN; rapamycin and FK506 abolish the interaction with GLMN in a dose dependent manner. Interacts directly with RYR1.

Its subcellular location is the cytoplasm. The protein resides in the cytosol. It localises to the sarcoplasmic reticulum membrane. It carries out the reaction [protein]-peptidylproline (omega=180) = [protein]-peptidylproline (omega=0). Inhibited by both FK506 and rapamycin. Keeps in an inactive conformation TGFBR1, the TGF-beta type I serine/threonine kinase receptor, preventing TGF-beta receptor activation in absence of ligand. Recruits SMAD7 to ACVR1B which prevents the association of SMAD2 and SMAD3 with the activin receptor complex, thereby blocking the activin signal. May modulate the RYR1 calcium channel activity. PPIases accelerate the folding of proteins. It catalyzes the cis-trans isomerization of proline imidic peptide bonds in oligopeptides. This is Peptidyl-prolyl cis-trans isomerase FKBP1A (FKBP1A) from Homo sapiens (Human).